Here is a 1049-residue protein sequence, read N- to C-terminus: Isoleucine--tRNA ligase (1049 aa).

A 'HIGH' region motif is present at residues 48–59 (PYPSSPTPHIGT). The 'KMSKS' region motif lies at 597–601 (EMHKS). Lys600 is a binding site for ATP.

It belongs to the class-I aminoacyl-tRNA synthetase family. IleS type 2 subfamily. As to quaternary structure, monomer. The cofactor is Zn(2+).

It localises to the cytoplasm. The enzyme catalyses tRNA(Ile) + L-isoleucine + ATP = L-isoleucyl-tRNA(Ile) + AMP + diphosphate. Catalyzes the attachment of isoleucine to tRNA(Ile). As IleRS can inadvertently accommodate and process structurally similar amino acids such as valine, to avoid such errors it has two additional distinct tRNA(Ile)-dependent editing activities. One activity is designated as 'pretransfer' editing and involves the hydrolysis of activated Val-AMP. The other activity is designated 'posttransfer' editing and involves deacylation of mischarged Val-tRNA(Ile). In Saccharolobus islandicus (strain M.16.27) (Sulfolobus islandicus), this protein is Isoleucine--tRNA ligase.